Reading from the N-terminus, the 476-residue chain is Abscisic acid 8'-hydroxylase CYP707A1 (476 aa).

The chain crosses the membrane as a helical span at residues F5–F25. C422 is a binding site for heme.

This sequence belongs to the cytochrome P450 family. It depends on heme as a cofactor. As to expression, expressed in ovaries (specifically in ovules and placenta), sepals, petals and pedicels.

The protein resides in the membrane. It catalyses the reaction 2-cis-(+)-abscisate + reduced [NADPH--hemoprotein reductase] + O2 = (+)-8'-hydroxyabscisate + oxidized [NADPH--hemoprotein reductase] + H2O + H(+). It functions in the pathway plant hormone degradation; abscisic acid degradation. In terms of biological role, involved in the oxidative degradation of abscisic acid, especially in pollinated ovaries. In Solanum lycopersicum (Tomato), this protein is Abscisic acid 8'-hydroxylase CYP707A1.